The chain runs to 97 residues: C-C motif chemokine 7 (97 aa).

A signal peptide spans 1-23 (MQISAALLCVLLTAAAFTVHVWA). Gln-24 carries the post-translational modification Pyrrolidone carboxylic acid. Asn-29 carries N-linked (GlcNAc...) asparagine glycosylation. Cystine bridges form between Cys-33/Cys-57 and Cys-34/Cys-73.

Belongs to the intercrine beta (chemokine CC) family. In terms of assembly, monomer. Interacts with TNFAIP6 (via Link domain).

The protein localises to the secreted. Its function is as follows. Chemotactic factor that attracts monocytes and eosinophils, but not neutrophils. Augments monocyte anti-tumor activity. This Rattus norvegicus (Rat) protein is C-C motif chemokine 7 (Ccl7).